The sequence spans 555 residues: Urocanate hydratase (555 aa).

Residues 51–52 (GG), Gln129, 175–177 (GMG), Glu195, Arg200, 241–242 (NA), 262–266 (QTSAH), 272–273 (YL), and Tyr321 each bind NAD(+). Residue Cys409 is part of the active site. Gly491 is a binding site for NAD(+).

Belongs to the urocanase family. Requires NAD(+) as cofactor.

Its subcellular location is the cytoplasm. The catalysed reaction is 4-imidazolone-5-propanoate = trans-urocanate + H2O. It participates in amino-acid degradation; L-histidine degradation into L-glutamate; N-formimidoyl-L-glutamate from L-histidine: step 2/3. Catalyzes the conversion of urocanate to 4-imidazolone-5-propionate. The protein is Urocanate hydratase of Rhizorhabdus wittichii (strain DSM 6014 / CCUG 31198 / JCM 15750 / NBRC 105917 / EY 4224 / RW1) (Sphingomonas wittichii).